We begin with the raw amino-acid sequence, 115 residues long: Putative membrane protein insertion efficiency factor (115 aa).

This sequence belongs to the UPF0161 family.

The protein localises to the cell membrane. Its function is as follows. Could be involved in insertion of integral membrane proteins into the membrane. The sequence is that of Putative membrane protein insertion efficiency factor from Mycolicibacterium paratuberculosis (strain ATCC BAA-968 / K-10) (Mycobacterium paratuberculosis).